We begin with the raw amino-acid sequence, 256 residues long: Omega-amidase YafV (256 aa).

In terms of domain architecture, CN hydrolase spans 4–234 (LKLTLLQQPL…AAQLDAELSL (231 aa)). Glutamate 42 functions as the Proton acceptor in the catalytic mechanism. Lysine 107 is a catalytic residue. Residue cysteine 141 is the Nucleophile of the active site.

Belongs to the carbon-nitrogen hydrolase superfamily. NIT1/NIT2 family.

It catalyses the reaction a monoamide of a dicarboxylate + H2O = a dicarboxylate + NH4(+). Functionally, hydrolyzes alpha-ketoglutaramate (a-KGM) to alpha-ketoglutarate (alpha-KG) and ammonia (specific activity 21 umol/min/mg), has very weak activity on L-glutamine, and no activity on deaminated glutathione (dGSH) or glutathione. May function as a metabolite repair enzyme. The chain is Omega-amidase YafV from Yersinia enterocolitica.